A 229-amino-acid chain; its full sequence is Potassium/proton antiporter CemA (229 aa).

Transmembrane regions (helical) follow at residues 7 to 27 (FNPL…SFSF), 107 to 127 (ILNF…YILG), 154 to 174 (ILLL…ELMI), and 189 to 209 (IISG…KYLI).

The protein belongs to the CemA family.

Its subcellular location is the plastid. The protein localises to the chloroplast inner membrane. It catalyses the reaction K(+)(in) + H(+)(out) = K(+)(out) + H(+)(in). Functionally, contributes to K(+)/H(+) antiport activity by supporting proton efflux to control proton extrusion and homeostasis in chloroplasts in a light-dependent manner to modulate photosynthesis. Prevents excessive induction of non-photochemical quenching (NPQ) under continuous-light conditions. Indirectly promotes efficient inorganic carbon uptake into chloroplasts. This is Potassium/proton antiporter CemA from Ranunculus macranthus (Large buttercup).